Reading from the N-terminus, the 307-residue chain is Oxygen-dependent coproporphyrinogen-III oxidase (307 aa).

Substrate is bound at residue serine 99. A divalent metal cation contacts are provided by histidine 103 and histidine 113. Histidine 113 (proton donor) is an active-site residue. 115-117 contributes to the substrate binding site; the sequence is NVR. 2 residues coordinate a divalent metal cation: histidine 152 and histidine 182. The tract at residues 247 to 282 is important for dimerization; the sequence is YVEFNLVFDRGTLFGLQSGGRTESILMSMPPVANWR. 265-267 is a substrate binding site; sequence GGR.

It belongs to the aerobic coproporphyrinogen-III oxidase family. In terms of assembly, homodimer. Requires a divalent metal cation as cofactor.

The protein localises to the cytoplasm. It catalyses the reaction coproporphyrinogen III + O2 + 2 H(+) = protoporphyrinogen IX + 2 CO2 + 2 H2O. It participates in porphyrin-containing compound metabolism; protoporphyrin-IX biosynthesis; protoporphyrinogen-IX from coproporphyrinogen-III (O2 route): step 1/1. Functionally, involved in the heme biosynthesis. Catalyzes the aerobic oxidative decarboxylation of propionate groups of rings A and B of coproporphyrinogen-III to yield the vinyl groups in protoporphyrinogen-IX. The protein is Oxygen-dependent coproporphyrinogen-III oxidase of Burkholderia multivorans (strain ATCC 17616 / 249).